Reading from the N-terminus, the 496-residue chain is Steroid 21-hydroxylase (496 aa).

Position 109 (serine 109) interacts with heme b. Position 232 (arginine 232) interacts with 17alpha-hydroxyprogesterone. Arginine 232 serves as a coordination point for progesterone. 3 residues coordinate heme b: histidine 364, arginine 425, and cysteine 427.

Belongs to the cytochrome P450 family. Heme b serves as cofactor.

It is found in the endoplasmic reticulum membrane. The protein resides in the microsome membrane. It catalyses the reaction progesterone + reduced [NADPH--hemoprotein reductase] + O2 = 21-hydroxyprogesterone + oxidized [NADPH--hemoprotein reductase] + H2O + H(+). It carries out the reaction 17alpha-hydroxyprogesterone + reduced [NADPH--hemoprotein reductase] + O2 = 11-deoxycortisol + oxidized [NADPH--hemoprotein reductase] + H2O + H(+). In terms of biological role, a cytochrome P450 monooxygenase that plays a major role in adrenal steroidogenesis. Catalyzes the hydroxylation at C-21 of progesterone and 17alpha-hydroxyprogesterone to respectively form 11-deoxycorticosterone and 11-deoxycortisol, intermediate metabolites in the biosynthetic pathway of mineralocorticoids and glucocorticoids. Mechanistically, uses molecular oxygen inserting one oxygen atom into a substrate, and reducing the second into a water molecule, with two electrons provided by NADPH via cytochrome P450 reductase (CPR; NADPH-ferrihemoprotein reductase). The chain is Steroid 21-hydroxylase (CYP21) from Bos taurus (Bovine).